The following is a 468-amino-acid chain: 6-phospho-beta-galactosidase (468 aa).

5 residues coordinate D-galactose 6-phosphate: Gln19, His116, Asn159, Glu160, and Asn297. Glu160 serves as the catalytic Proton donor. The active-site Nucleophile is Glu375. D-galactose 6-phosphate contacts are provided by Ser428, Trp429, Lys435, and Tyr437.

This sequence belongs to the glycosyl hydrolase 1 family.

It catalyses the reaction a 6-phospho-beta-D-galactoside + H2O = D-galactose 6-phosphate + an alcohol. It participates in carbohydrate metabolism; lactose degradation; D-galactose 6-phosphate and beta-D-glucose from lactose 6-phosphate: step 1/1. This Streptococcus pyogenes serotype M2 (strain MGAS10270) protein is 6-phospho-beta-galactosidase.